A 376-amino-acid polypeptide reads, in one-letter code: Inactive 2'-5'-oligoadenylate synthase 1B (376 aa).

Over Met1–Lys351 the chain is Cytoplasmic. The helical; Anchor for type IV membrane protein transmembrane segment at Tyr352–Phe370 threads the bilayer. Topologically, residues Gly371–Gly376 are extracellular.

Belongs to the 2-5A synthase family. Interacts with OSBPL1A and ABCF3. Highly expressed in lung, spleen and thymus. Also detected at lower levels in heart, kidney, liver, lung, skeletal muscle, testes, uterus and ovaries.

The protein resides in the endoplasmic reticulum membrane. Its function is as follows. Does not have 2'-5'-OAS activity, but can bind double-stranded RNA. The full-length protein displays antiviral activity against flaviviruses such as west Nile virus (WNV) via an alternative antiviral pathway independent of RNase L. The truncated form of the protein lacks antiviral activity. The sequence is that of Inactive 2'-5'-oligoadenylate synthase 1B (Oas1b) from Mus musculus (Mouse).